The chain runs to 232 residues: Large ribosomal subunit protein uL1 (232 aa).

Belongs to the universal ribosomal protein uL1 family. As to quaternary structure, part of the 50S ribosomal subunit.

In terms of biological role, binds directly to 23S rRNA. The L1 stalk is quite mobile in the ribosome, and is involved in E site tRNA release. Functionally, protein L1 is also a translational repressor protein, it controls the translation of the L11 operon by binding to its mRNA. The polypeptide is Large ribosomal subunit protein uL1 (Burkholderia multivorans (strain ATCC 17616 / 249)).